A 279-amino-acid chain; its full sequence is GTP cyclohydrolase MptA (279 aa).

This sequence belongs to the GTP cyclohydrolase IV family. Homodimer. It depends on Fe(2+) as a cofactor.

The enzyme catalyses GTP + H2O = 7,8-dihydroneopterin 2',3'-cyclic phosphate + formate + diphosphate + H(+). The protein operates within cofactor biosynthesis; 5,6,7,8-tetrahydromethanopterin biosynthesis. In terms of biological role, converts GTP to 7,8-dihydro-D-neopterin 2',3'-cyclic phosphate, the first intermediate in the biosynthesis of coenzyme methanopterin. The polypeptide is GTP cyclohydrolase MptA (Korarchaeum cryptofilum (strain OPF8)).